A 554-amino-acid chain; its full sequence is MASAAMLVPLVLVLCTAAASAAVVEHTFKVGGTKITQLCMNSVIYTANQQLPGPTIEVTEGDTLVVHAVNDSPYPLSLHWHGVYQLRSGWNDGANKITQCPIQPSGNFTYRFNITGQEGTLWWHAHSSLLRATIYGALIIKPRNGPSGYPFPEPYEEIPILLGEWWNRNVDDVENDGYLTGLGPQISDALTINGMPGDQNRCKGSAMYEVEVEYGKTCLLRIINAAVNVELFFKVAGHTFTVVAADASYTKPYATDVIVIAPGQTVDALMNTTASPGRYYMAAHVFDSKTVAVPFDQSTATGIVKYKGVPNYAPAAMPSLPPHDDVVTAGRFYWSLTGLARPSDPGVPTTVDHNMVVTFGLDQAPCAPNQTKCSGFALVAAMNRNSFQFPDQKVSLLEALYKGVPGVYSEDFPDFPPPMQGFRKATAVKKVKYNDVVEVVLQSEQYSSTLGTENHPIHLHGFDFYLLAQGLGRFNPSMKSKYNLVDPQVRNTVAVPAGGWAVIRFMANNPGMWFMHCHLDAHLPLGLAMVFEVLNGPAPNLLPPPPVDHPKCHG.

The signal sequence occupies residues 1-21 (MASAAMLVPLVLVLCTAAASA). Plastocyanin-like domains are found at residues 29–145 (KVGG…PRNG) and 156–309 (EEIP…YKGV). Residues His-79 and His-81 each coordinate Cu cation. Residues Asn-107 and Asn-113 are each glycosylated (N-linked (GlcNAc...) asparagine). 2 residues coordinate Cu cation: His-124 and His-126. N-linked (GlcNAc...) asparagine glycans are attached at residues Asn-271 and Asn-369. One can recognise a Plastocyanin-like 3 domain in the interval 411–537 (DFPDFPPPMQ…AMVFEVLNGP (127 aa)). Residues His-455, His-458, His-460, His-516, Cys-517, His-518, and His-522 each coordinate Cu cation.

It belongs to the multicopper oxidase family. The cofactor is Cu cation.

It localises to the secreted. The protein resides in the extracellular space. The protein localises to the apoplast. It catalyses the reaction 4 hydroquinone + O2 = 4 benzosemiquinone + 2 H2O. Lignin degradation and detoxification of lignin-derived products. The polypeptide is Laccase-8 (LAC8) (Oryza sativa subsp. japonica (Rice)).